The following is a 431-amino-acid chain: Na(+)/H(+) antiporter NhaA (431 aa).

11 helical membrane passes run 33–53 (VGGA…NSPW), 74–94 (LSIS…VVGV), 112–132 (ALPI…FVGV), 144–164 (GWAI…AVIA), 173–193 (IFLL…IAVF), 197–217 (QLSF…GLAV), 225–245 (FLLL…GVHA), 279–299 (FAVP…LSGF), 311–331 (VIAG…YVLA), 347–367 (VLGL…IGEL), and 379–399 (AKIA…VVLL).

This sequence belongs to the NhaA Na(+)/H(+) (TC 2.A.33) antiporter family.

Its subcellular location is the cell membrane. It catalyses the reaction Na(+)(in) + 2 H(+)(out) = Na(+)(out) + 2 H(+)(in). In terms of biological role, na(+)/H(+) antiporter that extrudes sodium in exchange for external protons. This Mycolicibacterium smegmatis (strain ATCC 700084 / mc(2)155) (Mycobacterium smegmatis) protein is Na(+)/H(+) antiporter NhaA.